The sequence spans 269 residues: Regulating synaptic membrane exocytosis protein 4 (269 aa).

Positions 115–233 constitute a C2 domain; that stretch reads PMGDVEIGLQ…DLTTLAVGWY (119 aa). A phosphoserine mark is found at Ser254 and Ser257.

Binds PPFIA3. Does not bind RAB3.

The protein localises to the synapse. Functionally, regulates synaptic membrane exocytosis. The polypeptide is Regulating synaptic membrane exocytosis protein 4 (Rims4) (Mus musculus (Mouse)).